The chain runs to 236 residues: MASRVICFLSLNLLLLDVITRLQVSGQLQLSPKKVDAEIGQEVKLTCEVLRDTSQGCSWLFRNSSSELLQPTFIIYVSSSRSKLNDILDPNLFSARKENNKYILTLSKFSTKNQGYYFCSITSNSVMYFSPLVPVFQKVNSIITKPVTRAPTPVPPPTGTPRPLRPEACRPGASGSVEGMGLGFACDIYIWAPLAGICAVLLLSLVITLICCHRNRRRVCKCPRPLVKPRPSEKFV.

A signal peptide spans 1-26 (MASRVICFLSLNLLLLDVITRLQVSG). Residues 27–130 (QLQLSPKKVD…ITSNSVMYFS (104 aa)) form the Ig-like V-type domain. Over 27–189 (QLQLSPKKVD…MGLGFACDIY (163 aa)) the chain is Extracellular. The cysteines at positions 47 and 119 are disulfide-linked. N-linked (GlcNAc...) asparagine glycosylation occurs at Asn-63. Residue Thr-144 is glycosylated (O-linked (GalNAc...) threonine; partial). Residues Thr-148, Thr-152, Thr-158, and Thr-160 are each glycosylated (O-linked (GalNAc...) threonine). The tract at residues 150 to 170 (APTPVPPPTGTPRPLRPEACR) is disordered. The chain crosses the membrane as a helical span at residues 190–210 (IWAPLAGICAVLLLSLVITLI). The S-palmitoyl cysteine moiety is linked to residue Cys-211. Residues 211–236 (CCHRNRRRVCKCPRPLVKPRPSEKFV) lie on the Cytoplasmic side of the membrane.

As to quaternary structure, forms disulfide-linked heterodimers with CD8B at the cell surface. Also forms homodimers in several cell types including NK-cells or peripheral blood T-lymphocytes. Interacts with the MHC class I HLA-A/B2M dimer. Interacts with LCK in a zinc-dependent manner. In terms of processing, palmitoylated, but association with CD8B seems to be more important for the enrichment of CD8A in lipid rafts. Post-translationally, O-glycosylated. Phosphorylated in cytotoxic T-lymphocytes (CTLs) following activation.

The protein resides in the cell membrane. In terms of biological role, integral membrane glycoprotein that plays an essential role in the immune response and serves multiple functions in responses against both external and internal offenses. In T-cells, functions primarily as a coreceptor for MHC class I molecule:peptide complex. The antigens presented by class I peptides are derived from cytosolic proteins while class II derived from extracellular proteins. Interacts simultaneously with the T-cell receptor (TCR) and the MHC class I proteins presented by antigen presenting cells (APCs). In turn, recruits the Src kinase LCK to the vicinity of the TCR-CD3 complex. LCK then initiates different intracellular signaling pathways by phosphorylating various substrates ultimately leading to lymphokine production, motility, adhesion and activation of cytotoxic T-lymphocytes (CTLs). This mechanism enables CTLs to recognize and eliminate infected cells and tumor cells. In NK-cells, the presence of CD8A homodimers at the cell surface provides a survival mechanism allowing conjugation and lysis of multiple target cells. CD8A homodimer molecules also promote the survival and differentiation of activated lymphocytes into memory CD8 T-cells. This chain is T-cell surface glycoprotein CD8 alpha chain (Cd8a), found in Rattus norvegicus (Rat).